A 254-amino-acid chain; its full sequence is Triosephosphate isomerase (254 aa).

Position 12–14 (12–14 (NWK)) interacts with substrate. The active-site Electrophile is histidine 99. Glutamate 169 functions as the Proton acceptor in the catalytic mechanism. Substrate-binding positions include glycine 175, serine 214, and 235 to 236 (GG).

Belongs to the triosephosphate isomerase family. As to quaternary structure, homodimer.

It localises to the cytoplasm. It carries out the reaction D-glyceraldehyde 3-phosphate = dihydroxyacetone phosphate. The protein operates within carbohydrate biosynthesis; gluconeogenesis. It participates in carbohydrate degradation; glycolysis; D-glyceraldehyde 3-phosphate from glycerone phosphate: step 1/1. Involved in the gluconeogenesis. Catalyzes stereospecifically the conversion of dihydroxyacetone phosphate (DHAP) to D-glyceraldehyde-3-phosphate (G3P). This Xanthobacter autotrophicus (strain ATCC BAA-1158 / Py2) protein is Triosephosphate isomerase.